We begin with the raw amino-acid sequence, 325 residues long: Elongation factor P--(R)-beta-lysine ligase (325 aa).

76-78 contacts substrate; sequence SPE. ATP-binding positions include 100–102 and Asn109; that span reads RNE. Tyr118 provides a ligand contact to substrate. 244–245 contributes to the ATP binding site; it reads EL. Residue Glu251 participates in substrate binding. Residue Gly300 coordinates ATP.

Belongs to the class-II aminoacyl-tRNA synthetase family. EpmA subfamily. As to quaternary structure, homodimer.

It catalyses the reaction D-beta-lysine + L-lysyl-[protein] + ATP = N(6)-((3R)-3,6-diaminohexanoyl)-L-lysyl-[protein] + AMP + diphosphate + H(+). With EpmB is involved in the beta-lysylation step of the post-translational modification of translation elongation factor P (EF-P) on 'Lys-34'. Catalyzes the ATP-dependent activation of (R)-beta-lysine produced by EpmB, forming a lysyl-adenylate, from which the beta-lysyl moiety is then transferred to the epsilon-amino group of EF-P 'Lys-34'. The chain is Elongation factor P--(R)-beta-lysine ligase from Salmonella gallinarum (strain 287/91 / NCTC 13346).